A 152-amino-acid chain; its full sequence is MASKQLSREELDEKAKQGETVVPGGTGGHSLEAQEHLAEGRSKGGQTRKEQLGHEGYQEIGHKGGEARKEQLGHEGYQEMGHKGGEARKEQLGHEGYQEMGHKGGEARKEQLGHEGYKEMGRKGGLSTMEKSGGERAEEEGIEIDESKFTNK.

Composition is skewed to basic and acidic residues over residues 1–17 (MASK…KAKQ) and 32–63 (EAQE…IGHK). The interval 1–63 (MASKQLSREE…HEGYQEIGHK (63 aa)) is disordered. Repeat copies occupy residues 44–63 (GGQT…IGHK), 64–83 (GGEA…MGHK), 84–103 (GGEA…MGHK), and 104–123 (GGEA…MGRK). Residues 44 to 123 (GGQTRKEQLG…HEGYKEMGRK (80 aa)) are 4 X 20 AA tandem repeats. Residues 116–152 (GYKEMGRKGGLSTMEKSGGERAEEEGIEIDESKFTNK) are disordered.

This sequence belongs to the small hydrophilic plant seed protein family. In seeds only. Specifically located to vascular bundles in the cotyledon and axis of the dry seed. Also found in the epiderm and outer layers of the cortex in the embryo axis.

Functionally, it is thought to provide protection for the cytoplasm during the desiccation stage of embryo development. This chain is Em-like protein GEA1 (EM1), found in Arabidopsis thaliana (Mouse-ear cress).